A 385-amino-acid chain; its full sequence is ATP synthase subunit a-1 (385 aa).

Positions 1-133 (MRRIFLFDEN…ALNIVGQAAA (133 aa)) are excised as a propeptide. Transmembrane regions (helical) follow at residues 154–174 (FSFTNSSLFMLLTLSFFLLLI), 220–240 (FFPCILVTFLFLLFCNLQGMI), 249–269 (HFLITLALSFSIFIGITIVGF), 276–296 (FFSFLLPAGVPLPLAPFLVLL), 316–336 (MMAGHSLVKILSGFAWTMLCM), 339–359 (IFYFIGALGPLFIVLALTGLE), and 362–382 (VAILQAYVFTILICIYLNDAI).

The protein belongs to the ATPase A chain family. F-type ATPases have 2 components, CF(1) - the catalytic core - and CF(0) - the membrane proton channel. CF(1) has five subunits: alpha(3), beta(3), gamma(1), delta(1), epsilon(1). CF(0) has three main subunits: a, b and c.

It localises to the mitochondrion inner membrane. Its function is as follows. Mitochondrial membrane ATP synthase (F(1)F(0) ATP synthase or Complex V) produces ATP from ADP in the presence of a proton gradient across the membrane which is generated by electron transport complexes of the respiratory chain. F-type ATPases consist of two structural domains, F(1) - containing the extramembraneous catalytic core and F(0) - containing the membrane proton channel, linked together by a central stalk and a peripheral stalk. During catalysis, ATP synthesis in the catalytic domain of F(1) is coupled via a rotary mechanism of the central stalk subunits to proton translocation. Key component of the proton channel; it may play a direct role in the translocation of protons across the membrane. The chain is ATP synthase subunit a-1 (ATP6-1) from Arabidopsis thaliana (Mouse-ear cress).